The chain runs to 205 residues: NAD(P)H-quinone oxidoreductase subunit 6, organellar chromatophore (205 aa).

Helical transmembrane passes span 9-29, 32-52, 61-81, 90-110, and 145-165; these read LICF…VVLL, IVYS…LYLL, AQVL…IMLV, IPGL…LLVI, and LLPF…AIVL.

The protein belongs to the complex I subunit 6 family. NDH is composed of at least 16 different subunits, 5 of which are encoded in the nucleus.

The protein localises to the plastid. Its subcellular location is the organellar chromatophore thylakoid membrane. The catalysed reaction is a plastoquinone + NADH + (n+1) H(+)(in) = a plastoquinol + NAD(+) + n H(+)(out). It catalyses the reaction a plastoquinone + NADPH + (n+1) H(+)(in) = a plastoquinol + NADP(+) + n H(+)(out). Its function is as follows. NDH shuttles electrons from NAD(P)H:plastoquinone, via FMN and iron-sulfur (Fe-S) centers, to quinones in the photosynthetic chain and possibly in a chloroplast respiratory chain. The immediate electron acceptor for the enzyme in this species is believed to be plastoquinone. Couples the redox reaction to proton translocation, and thus conserves the redox energy in a proton gradient. The sequence is that of NAD(P)H-quinone oxidoreductase subunit 6, organellar chromatophore (ndhG) from Paulinella chromatophora.